A 109-amino-acid chain; its full sequence is Insulin (109 aa).

Residues 1–24 (MAPWMHLLTVLALLALWGPNSVQA) form the signal peptide. 3 cysteine pairs are disulfide-bonded: Cys31–Cys93, Cys43–Cys106, and Cys92–Cys97. Positions 56–84 (ELEDLQVEQAELGLEAGGLQPSALEMILQ) are cleaved as a propeptide — c peptide.

The protein belongs to the insulin family. As to quaternary structure, heterodimer of a B chain and an A chain linked by two disulfide bonds.

It is found in the secreted. Insulin decreases blood glucose concentration. It increases cell permeability to monosaccharides, amino acids and fatty acids. It accelerates glycolysis, the pentose phosphate cycle, and glycogen synthesis in liver. This chain is Insulin (INS), found in Octodon degus (Degu).